The chain runs to 259 residues: Hydroxyacylglutathione hydrolase (259 aa).

The Zn(2+) site is built by H56, H58, D60, H61, H112, D133, and H171. Residues 224–238 (RTRETSVKEKADERS) are compositionally biased toward basic and acidic residues. The interval 224–245 (RTRETSVKEKADERSSGQNTSQ) is disordered.

This sequence belongs to the metallo-beta-lactamase superfamily. Glyoxalase II family. As to quaternary structure, monomer. The cofactor is Zn(2+).

The catalysed reaction is an S-(2-hydroxyacyl)glutathione + H2O = a 2-hydroxy carboxylate + glutathione + H(+). It participates in secondary metabolite metabolism; methylglyoxal degradation; (R)-lactate from methylglyoxal: step 2/2. Thiolesterase that catalyzes the hydrolysis of S-D-lactoyl-glutathione to form glutathione and D-lactic acid. The sequence is that of Hydroxyacylglutathione hydrolase from Pseudomonas savastanoi pv. phaseolicola (strain 1448A / Race 6) (Pseudomonas syringae pv. phaseolicola (strain 1448A / Race 6)).